The following is a 583-amino-acid chain: Radixin (583 aa).

The region spanning 5 to 295 is the FERM domain; sequence INVRVTTMDA…GNHELYMRRR (291 aa). A 1,2-diacyl-sn-glycero-3-phospho-(1D-myo-inositol) is bound at residue 60–63; that stretch reads KLNK. Lys-83 carries the N6-succinyllysine modification. Lys-278 is a binding site for a 1,2-diacyl-sn-glycero-3-phospho-(1D-myo-inositol). 3 disordered regions span residues 310–330, 376–407, and 462–526; these read REEK…KKKR, DQER…AKQA, and ELKT…RVKK. Basic and acidic residues predominate over residues 376 to 400; sequence DQERKRAKEEAERLEKERRAAEEAK. Positions 469–480 are enriched in pro residues; sequence APPPPPPPPVIP. Composition is skewed to basic and acidic residues over residues 483–492 and 506–525; these read ENEHDEHDEN and MNHR…ERVK. Thr-564 is subject to Phosphothreonine; by ROCK2.

In terms of assembly, binds NHERF1. Interacts with NHERF1, NHERF2, LAYN, MME/NEP and ICAM2. Interacts with CPNE1 (via VWFA domain) and CPNE4 (via VWFA domain). Interacts (via FERM domain) with SPN/CD43 cytoplasmic tail. Interacts with CD44. Interacts with CLIC5; may work together in a complex which also includes EZR and MYO6 to stabilize linkages between the plasma membrane and subjacent actin cytoskeleton at the base of stereocilia. Phosphorylated by tyrosine-protein kinases. Phosphorylation by ROCK2 suppresses the head-to-tail association of the N-terminal and C-terminal halves resulting in an opened conformation which is capable of actin and membrane-binding.

Its subcellular location is the cell membrane. The protein localises to the cytoplasm. The protein resides in the cytoskeleton. It is found in the cleavage furrow. It localises to the cell projection. Its subcellular location is the microvillus. The protein localises to the stereocilium. With respect to regulation, a head-to-tail association, of the N-terminal and C-terminal halves results in a closed conformation (inactive form) which is incapable of actin or membrane-binding. Probably plays a crucial role in the binding of the barbed end of actin filaments to the plasma membrane. This Homo sapiens (Human) protein is Radixin (RDX).